A 118-amino-acid chain; its full sequence is V-type proton ATPase subunit G 1 (118 aa).

Ala2 carries the post-translational modification N-acetylalanine.

It belongs to the V-ATPase G subunit family. In terms of assembly, V-ATPase is a heteromultimeric enzyme made up of two complexes: the ATP-hydrolytic V1 complex and the proton translocation V0 complex. The V1 complex consists of three catalytic AB heterodimers that form a heterohexamer, three peripheral stalks each consisting of EG heterodimers, one central rotor including subunits D and F, and the regulatory subunits C and H. The proton translocation complex V0 consists of the proton transport subunit a, a ring of proteolipid subunits c9c'', rotary subunit d, subunits e and f, and the accessory subunits ATP6AP1/Ac45 and ATP6AP2/PRR. Kidney; localizes to early distal nephron, encompassing thick ascending limbs and distal convoluted tubules (at protein level). Ubiquitous.

It localises to the apical cell membrane. Functionally, subunit of the V1 complex of vacuolar(H+)-ATPase (V-ATPase), a multisubunit enzyme composed of a peripheral complex (V1) that hydrolyzes ATP and a membrane integral complex (V0) that translocates protons. V-ATPase is responsible for acidifying and maintaining the pH of intracellular compartments and in some cell types, is targeted to the plasma membrane, where it is responsible for acidifying the extracellular environment. In aerobic conditions, involved in intracellular iron homeostasis, thus triggering the activity of Fe(2+) prolyl hydroxylase (PHD) enzymes, and leading to HIF1A hydroxylation and subsequent proteasomal degradation. This is V-type proton ATPase subunit G 1 (Atp6v1g1) from Mus musculus (Mouse).